Consider the following 367-residue polypeptide: Peptide chain release factor 2 (367 aa).

N5-methylglutamine is present on Q250.

The protein belongs to the prokaryotic/mitochondrial release factor family. In terms of processing, methylated by PrmC. Methylation increases the termination efficiency of RF2.

It is found in the cytoplasm. Peptide chain release factor 2 directs the termination of translation in response to the peptide chain termination codons UGA and UAA. The sequence is that of Peptide chain release factor 2 from Kineococcus radiotolerans (strain ATCC BAA-149 / DSM 14245 / SRS30216).